The sequence spans 137 residues: Ribonuclease kappa (137 aa).

A run of 2 helical transmembrane segments spans residues 52–72 (ACGI…GIFF) and 104–124 (VSYN…FSFC).

This sequence belongs to the RNase K family. Interacts with the proton translocation complex V0 of the V-ATPase. Interacts with ATP6AP1. In terms of tissue distribution, widely expressed.

The protein localises to the endomembrane system. It localises to the cytoplasmic vesicle. It is found in the clathrin-coated vesicle membrane. In terms of biological role, endoribonuclease which preferentially cleaves ApU and ApG phosphodiester bonds. Hydrolyzes UpU bonds at a lower rate. Regulates the activity of vacuolar (H+)-ATPase (V-ATPase) which is responsible for acidifying and maintaining the pH of intracellular compartments. Required at an early stage of receptor-mediated endocytosis. Functionally, (Microbial infection) Required at an early stage of both clathrin-mediated and clathrin-independent endocytic uptake of a diverse set of viruses, including dengue, West Nile, Sindbis, Rift Valley Fever, influenza, and human rhinoviruses. This is Ribonuclease kappa (RNASEK) from Homo sapiens (Human).